Here is a 123-residue protein sequence, read N- to C-terminus: Large ribosomal subunit protein bL12 (123 aa).

Belongs to the bacterial ribosomal protein bL12 family. Homodimer. Part of the ribosomal stalk of the 50S ribosomal subunit. Forms a multimeric L10(L12)X complex, where L10 forms an elongated spine to which 2 to 4 L12 dimers bind in a sequential fashion. Binds GTP-bound translation factors.

Forms part of the ribosomal stalk which helps the ribosome interact with GTP-bound translation factors. Is thus essential for accurate translation. The polypeptide is Large ribosomal subunit protein bL12 (Bartonella tribocorum (strain CIP 105476 / IBS 506)).